Here is a 660-residue protein sequence, read N- to C-terminus: Bifunctional polymyxin resistance protein ArnA (660 aa).

Residues 1-304 (MKAVIFAYHD…TLGLVAGARL (304 aa)) form a formyltransferase ArnAFT region. H104 acts as the Proton donor; for formyltransferase activity in catalysis. (6R)-10-formyltetrahydrofolate contacts are provided by residues R114 and 136 to 140 (VKRAD). The segment at 314–660 (RRIRVLILGV…RSVDVAERAS (347 aa)) is dehydrogenase ArnADH. Residues D347 and 368–369 (DI) contribute to the NAD(+) site. Residues A393, Y398, and 432 to 433 (TS) contribute to the UDP-alpha-D-glucuronate site. E434 functions as the Proton acceptor; for decarboxylase activity in the catalytic mechanism. UDP-alpha-D-glucuronate is bound by residues R460, N492, 526–535 (KLIDGGQQKR), and Y613. R619 serves as the catalytic Proton donor; for decarboxylase activity.

In the N-terminal section; belongs to the Fmt family. UDP-L-Ara4N formyltransferase subfamily. The protein in the C-terminal section; belongs to the NAD(P)-dependent epimerase/dehydratase family. UDP-glucuronic acid decarboxylase subfamily. As to quaternary structure, homohexamer, formed by a dimer of trimers.

It carries out the reaction UDP-alpha-D-glucuronate + NAD(+) = UDP-beta-L-threo-pentopyranos-4-ulose + CO2 + NADH. The catalysed reaction is UDP-4-amino-4-deoxy-beta-L-arabinose + (6R)-10-formyltetrahydrofolate = UDP-4-deoxy-4-formamido-beta-L-arabinose + (6S)-5,6,7,8-tetrahydrofolate + H(+). It participates in nucleotide-sugar biosynthesis; UDP-4-deoxy-4-formamido-beta-L-arabinose biosynthesis; UDP-4-deoxy-4-formamido-beta-L-arabinose from UDP-alpha-D-glucuronate: step 1/3. The protein operates within nucleotide-sugar biosynthesis; UDP-4-deoxy-4-formamido-beta-L-arabinose biosynthesis; UDP-4-deoxy-4-formamido-beta-L-arabinose from UDP-alpha-D-glucuronate: step 3/3. It functions in the pathway bacterial outer membrane biogenesis; lipopolysaccharide biosynthesis. Its function is as follows. Bifunctional enzyme that catalyzes the oxidative decarboxylation of UDP-glucuronic acid (UDP-GlcUA) to UDP-4-keto-arabinose (UDP-Ara4O) and the addition of a formyl group to UDP-4-amino-4-deoxy-L-arabinose (UDP-L-Ara4N) to form UDP-L-4-formamido-arabinose (UDP-L-Ara4FN). The modified arabinose is attached to lipid A and is required for resistance to polymyxin and cationic antimicrobial peptides. This Salmonella newport (strain SL254) protein is Bifunctional polymyxin resistance protein ArnA.